A 74-amino-acid chain; its full sequence is Mu-Sparatoxin-Hp2 (74 aa).

The first 20 residues, 1–20 (MKIIVLMMMLFAAFSAVVLA), serve as a signal peptide directing secretion. Positions 21–35 (DKSIEDAALDTVMDR) are excised as a propeptide. Disulfide bonds link cysteine 42-cysteine 57, cysteine 49-cysteine 62, and cysteine 56-cysteine 66. At leucine 73 the chain carries Leucine amide.

Expressed by the venom gland.

It localises to the secreted. Functionally, weakly nhibits voltage-gated sodium channels Nav1.7/SCN9A. High concentration of the toxin (3 uM) inhibits Nav1.7/SCN9A currents by 80%. The chain is Mu-Sparatoxin-Hp2 from Heteropoda pingtungensis (Pingtung huntsman spider).